Consider the following 101-residue polypeptide: Protein S100-A4 (101 aa).

N-acetylalanine is present on Ala-2. Lys-7 is modified (N6-acetyllysine). 2 EF-hand domains span residues 12–47 (MVST…SFLG) and 50–85 (TDEA…IAMM). Ca(2+) contacts are provided by Lys-28 and Glu-33. Lys-35 carries the post-translational modification N6-acetyllysine. Residues Asp-63, Asn-65, Asp-67, Glu-69, and Glu-74 each coordinate Ca(2+).

The protein belongs to the S-100 family. In terms of assembly, homodimer. Interacts with PPFIBP1 in a calcium-dependent mode. Interacts with PGLYRP1; this complex acts as a chemoattractant that promotes lymphocyte movement. Interacts with MYH9; this interaction increases cell motility. Interacts with Annexin 2/ANXA2. Interacts with TP53; this interaction promotes TP53 degradation. Interacts with CCR5. Interacts with FCGR3A; this interaction inhibits PKC-dependent phosphorylation of FCGR3A. In terms of tissue distribution, ubiquitously expressed.

The protein resides in the secreted. Its subcellular location is the nucleus. It is found in the cytoplasm. Its function is as follows. Calcium-binding protein that plays a role in various cellular processes including motility, angiogenesis, cell differentiation, apoptosis, and autophagy. Increases cell motility and invasiveness by interacting with non-muscle myosin heavy chain (NMMHC) IIA/MYH9. Mechanistically, promotes filament depolymerization and increases the amount of soluble myosin-IIA, resulting in the formation of stable protrusions facilitating chemotaxis. Also modulates the pro-apoptotic function of TP53 by binding to its C-terminal transactivation domain within the nucleus and reducing its protein levels. Within the extracellular space, stimulates cytokine production including granulocyte colony-stimulating factor and CCL24 from T-lymphocytes. In addition, stimulates T-lymphocyte chemotaxis by acting as a chemoattractant complex with PGLYRP1 that promotes lymphocyte migration via CCR5 and CXCR3 receptors. The chain is Protein S100-A4 (S100A4) from Homo sapiens (Human).